The sequence spans 186 residues: Ribosome-recycling factor (186 aa).

Belongs to the RRF family.

It is found in the cytoplasm. Its function is as follows. Responsible for the release of ribosomes from messenger RNA at the termination of protein biosynthesis. May increase the efficiency of translation by recycling ribosomes from one round of translation to another. This is Ribosome-recycling factor from Prosthecochloris aestuarii (strain DSM 271 / SK 413).